The sequence spans 284 residues: D-tagatose-1,6-bisphosphate aldolase subunit GatY (284 aa).

The active-site Proton donor is the aspartate 82. 2 residues coordinate Zn(2+): histidine 83 and histidine 180. Glycine 181 lines the dihydroxyacetone phosphate pocket. Histidine 208 is a binding site for Zn(2+). Dihydroxyacetone phosphate is bound by residues 209 to 211 and 230 to 233; these read GAS and NVAT.

It belongs to the class II fructose-bisphosphate aldolase family. TagBP aldolase GatY subfamily. As to quaternary structure, forms a complex with GatZ. Zn(2+) is required as a cofactor.

It catalyses the reaction D-tagatofuranose 1,6-bisphosphate = D-glyceraldehyde 3-phosphate + dihydroxyacetone phosphate. It functions in the pathway carbohydrate metabolism; D-tagatose 6-phosphate degradation; D-glyceraldehyde 3-phosphate and glycerone phosphate from D-tagatose 6-phosphate: step 2/2. In terms of biological role, catalytic subunit of the tagatose-1,6-bisphosphate aldolase GatYZ, which catalyzes the reversible aldol condensation of dihydroxyacetone phosphate (DHAP or glycerone-phosphate) with glyceraldehyde 3-phosphate (G3P) to produce tagatose 1,6-bisphosphate (TBP). Requires GatZ subunit for full activity and stability. Is involved in the catabolism of galactitol. The protein is D-tagatose-1,6-bisphosphate aldolase subunit GatY of Shigella dysenteriae serotype 1 (strain Sd197).